The primary structure comprises 980 residues: Putative leucine-rich repeat receptor-like serine/threonine-protein kinase At2g24130 (980 aa).

The first 20 residues, 1–20, serve as a signal peptide directing secretion; that stretch reads MDYCSLLVVSFLITVMTVLA. Residues 21-593 are Extracellular-facing; it reads SKENDHELIK…ACKKKHKYPS (573 aa). 2 N-linked (GlcNAc...) asparagine glycosylation sites follow: N55 and N88. LRR repeat units lie at residues 65–89, 90–113, 115–138, 139–162, 165–189, 191–214, 215–238, and 240–263; these read STQV…IANL, TGLT…IGSL, ETLK…LGLL, NRLV…LFCN, SSSL…YHCH, KELR…LSNS, TNLK…VISK, and PQLQ…NLEP. 4 N-linked (GlcNAc...) asparagine glycosylation sites follow: N152, N162, N175, and N213. N-linked (GlcNAc...) asparagine glycosylation is found at N257 and N270. LRR repeat units lie at residues 271–295, 296–320, 322–344, 345–370, 372–391, 392–416, 417–440, 442–463, 464–490, 491–514, 515–537, and 539–563; these read SSDL…VRHL, SVNL…ISNL, NLTL…LCKL, SKLE…DIPR, GLLD…SFGN, LSQL…LGKC, INLE…VVSN, RNLK…PLEL, SKMD…LGSC, IALE…LGQL, PYLK…SFQQ, and STLK…SFSK. N-linked (GlcNAc...) asparagine glycosylation is found at N322 and N327. N-linked (GlcNAc...) asparagine glycans are attached at residues N380 and N391. N-linked (GlcNAc...) asparagine glycosylation is found at N428 and N449. N-linked (GlcNAc...) asparagine glycosylation occurs at N497. N545 and N554 each carry an N-linked (GlcNAc...) asparagine glycan. Residues 594–614 traverse the membrane as a helical segment; it reads VLLPVLLSLIATPVLCVFGYP. Over 615 to 980 the chain is Cytoplasmic; sequence LVQRSRFGKN…SQETQGEASS (366 aa). T658 bears the Phosphothreonine mark. The Protein kinase domain occupies 661 to 960; that stretch reads FNASSLIGSG…HEMGRLKEYL (300 aa). ATP-binding positions include 667–675 and K689; that span reads IGSGRFGHV. A Phosphotyrosine modification is found at Y775. The Proton acceptor role is filled by D788. Y841 bears the Phosphotyrosine mark.

Belongs to the protein kinase superfamily. Ser/Thr protein kinase family.

The protein localises to the cell membrane. It catalyses the reaction L-seryl-[protein] + ATP = O-phospho-L-seryl-[protein] + ADP + H(+). The enzyme catalyses L-threonyl-[protein] + ATP = O-phospho-L-threonyl-[protein] + ADP + H(+). This is Putative leucine-rich repeat receptor-like serine/threonine-protein kinase At2g24130 from Arabidopsis thaliana (Mouse-ear cress).